A 154-amino-acid chain; its full sequence is Large ribosomal subunit protein uL13 (154 aa).

The protein belongs to the universal ribosomal protein uL13 family. As to quaternary structure, part of the 50S ribosomal subunit.

Functionally, this protein is one of the early assembly proteins of the 50S ribosomal subunit, although it is not seen to bind rRNA by itself. It is important during the early stages of 50S assembly. The protein is Large ribosomal subunit protein uL13 of Borrelia garinii subsp. bavariensis (strain ATCC BAA-2496 / DSM 23469 / PBi) (Borreliella bavariensis).